Reading from the N-terminus, the 244-residue chain is ATP synthase subunit a (244 aa).

7 consecutive transmembrane segments (helical) span residues 20 to 40 (FFDISITTITVYLGLLMVIVI), 81 to 101 (GILFFPFIMSLFLFVLTLNVM), 113 to 133 (QLLVTFTLAITIMIGITIWGF), 140 to 160 (FLNIFVPSGIEPWLLPLLVFI), 176 to 196 (LFANMLAGHLLIHIIGVAAIY), 202 to 222 (FIGILPWICVIAFMFLELGIA), and 223 to 243 (FLQAYVFVLLTLIYIANIINL).

This sequence belongs to the ATPase A chain family. As to quaternary structure, F-type ATPases have 2 components, CF(1) - the catalytic core - and CF(0) - the membrane proton channel. CF(1) has five subunits: alpha(3), beta(3), gamma(1), delta(1), epsilon(1). CF(0) has three main subunits: a, b and c.

Its subcellular location is the mitochondrion inner membrane. Functionally, mitochondrial membrane ATP synthase (F(1)F(0) ATP synthase or Complex V) produces ATP from ADP in the presence of a proton gradient across the membrane which is generated by electron transport complexes of the respiratory chain. F-type ATPases consist of two structural domains, F(1) - containing the extramembraneous catalytic core and F(0) - containing the membrane proton channel, linked together by a central stalk and a peripheral stalk. During catalysis, ATP synthesis in the catalytic domain of F(1) is coupled via a rotary mechanism of the central stalk subunits to proton translocation. Key component of the proton channel; it may play a direct role in the translocation of protons across the membrane. The protein is ATP synthase subunit a (atp6) of Dictyostelium discoideum (Social amoeba).